A 112-amino-acid chain; its full sequence is Large ribosomal subunit protein bL17 (112 aa).

The protein belongs to the bacterial ribosomal protein bL17 family. As to quaternary structure, part of the 50S ribosomal subunit. Contacts protein L32.

This Desulforamulus reducens (strain ATCC BAA-1160 / DSM 100696 / MI-1) (Desulfotomaculum reducens) protein is Large ribosomal subunit protein bL17.